We begin with the raw amino-acid sequence, 276 residues long: Secreted RxLR effector protein 85 (276 aa).

A signal peptide spans 1–27 (MRYCAFRLGLFFIGYSCCVLLSTPTLA). The RxLR motif lies at 110–113 (RQLR).

This sequence belongs to the RxLR effector family.

The protein localises to the secreted. It localises to the host cell membrane. Functionally, secreted effector that partially suppresses the host cell death induced by cell death-inducing proteins. In Plasmopara viticola (Downy mildew of grapevine), this protein is Secreted RxLR effector protein 85.